The chain runs to 171 residues: Shikimate kinase (171 aa).

Position 14 to 19 (14 to 19 (GAGKST)) interacts with ATP. Serine 18 contributes to the Mg(2+) binding site. The substrate site is built by aspartate 36, arginine 60, and glycine 82. Arginine 120 lines the ATP pocket. Residue arginine 139 coordinates substrate. ATP is bound at residue glutamine 156.

It belongs to the shikimate kinase family. In terms of assembly, monomer. The cofactor is Mg(2+).

The protein localises to the cytoplasm. It carries out the reaction shikimate + ATP = 3-phosphoshikimate + ADP + H(+). Its pathway is metabolic intermediate biosynthesis; chorismate biosynthesis; chorismate from D-erythrose 4-phosphate and phosphoenolpyruvate: step 5/7. Functionally, catalyzes the specific phosphorylation of the 3-hydroxyl group of shikimic acid using ATP as a cosubstrate. This Psychromonas ingrahamii (strain DSM 17664 / CCUG 51855 / 37) protein is Shikimate kinase.